The sequence spans 502 residues: Glycerol kinase (502 aa).

ADP is bound at residue Thr14. Positions 14, 15, and 16 each coordinate ATP. Residue Thr14 participates in sn-glycerol 3-phosphate binding. Arg18 serves as a coordination point for ADP. Sn-glycerol 3-phosphate is bound by residues Arg84, Glu85, Tyr136, and Asp246. Positions 84, 85, 136, 246, and 247 each coordinate glycerol. Residues Thr268 and Gly311 each coordinate ADP. Residues Thr268, Gly311, Gln315, and Gly412 each coordinate ATP. Residues Gly412 and Asn416 each coordinate ADP.

Belongs to the FGGY kinase family. As to quaternary structure, homotetramer and homodimer (in equilibrium). Heterodimer with EIIA-Glc. Binds 1 zinc ion per glycerol kinase EIIA-Glc dimer. The zinc ion is important for dimerization.

It catalyses the reaction glycerol + ATP = sn-glycerol 3-phosphate + ADP + H(+). It participates in polyol metabolism; glycerol degradation via glycerol kinase pathway; sn-glycerol 3-phosphate from glycerol: step 1/1. Activity of this regulatory enzyme is affected by several metabolites. Allosterically and non-competitively inhibited by fructose 1,6-bisphosphate (FBP) and unphosphorylated phosphocarrier protein EIIA-Glc (III-Glc), an integral component of the bacterial phosphotransferase (PTS) system. In terms of biological role, key enzyme in the regulation of glycerol uptake and metabolism. Catalyzes the phosphorylation of glycerol to yield sn-glycerol 3-phosphate. In Escherichia coli (strain ATCC 8739 / DSM 1576 / NBRC 3972 / NCIMB 8545 / WDCM 00012 / Crooks), this protein is Glycerol kinase.